The sequence spans 108 residues: Type III secretion system chaperone SseA (108 aa).

Positions 69 to 97 (NQEAEKDLKKIVSLFKQLEVRLKQLNAQA) form a coiled coil.

Binds to SseB and SseD.

The protein resides in the cytoplasm. Functions as a type III secretion system (T3SS) chaperone, which is required for SseB and SseD accumulation and secretion. May have a direct role in secretion of SseB and SseD, or may facilitate their correct folding, for efficient secretion and function. Required for survival and replication within epithelial cells and macrophages. The protein is Type III secretion system chaperone SseA (sseA) of Salmonella typhimurium (strain LT2 / SGSC1412 / ATCC 700720).